A 220-amino-acid polypeptide reads, in one-letter code: 7-cyano-7-deazaguanine synthase (220 aa).

An ATP-binding site is contributed by 10–20 (FSGGQDSTTCL). Zn(2+)-binding residues include C186, C195, C198, and C201.

Belongs to the QueC family. Homodimer. The cofactor is Zn(2+).

It carries out the reaction 7-carboxy-7-deazaguanine + NH4(+) + ATP = 7-cyano-7-deazaguanine + ADP + phosphate + H2O + H(+). Its pathway is purine metabolism; 7-cyano-7-deazaguanine biosynthesis. Its function is as follows. Catalyzes the ATP-dependent conversion of 7-carboxy-7-deazaguanine (CDG) to 7-cyano-7-deazaguanine (preQ(0)). The chain is 7-cyano-7-deazaguanine synthase from Bacillus thuringiensis (strain Al Hakam).